The following is a 62-amino-acid chain: Large ribosomal subunit protein bL32m (62 aa).

It belongs to the bacterial ribosomal protein bL32 family.

It localises to the mitochondrion. This chain is Large ribosomal subunit protein bL32m (RPL32), found in Reclinomonas americana.